Reading from the N-terminus, the 603-residue chain is Elongation factor 4 (603 aa).

Positions 7-189 constitute a tr-type G domain; it reads SHIRNFSIIA…SIVHLVPPPR (183 aa). Residues 19 to 24 and 136 to 139 contribute to the GTP site; these read DHGKST and NKID.

This sequence belongs to the TRAFAC class translation factor GTPase superfamily. Classic translation factor GTPase family. LepA subfamily.

The protein resides in the cell inner membrane. The enzyme catalyses GTP + H2O = GDP + phosphate + H(+). Required for accurate and efficient protein synthesis under certain stress conditions. May act as a fidelity factor of the translation reaction, by catalyzing a one-codon backward translocation of tRNAs on improperly translocated ribosomes. Back-translocation proceeds from a post-translocation (POST) complex to a pre-translocation (PRE) complex, thus giving elongation factor G a second chance to translocate the tRNAs correctly. Binds to ribosomes in a GTP-dependent manner. In Thermosynechococcus vestitus (strain NIES-2133 / IAM M-273 / BP-1), this protein is Elongation factor 4.